Consider the following 300-residue polypeptide: Dioxygenase FUM3 (300 aa).

Fe cation is bound by residues His146, Asp148, and His222.

The protein belongs to the PhyH family. As to quaternary structure, homodimer. The cofactor is Fe cation.

It functions in the pathway mycotoxin biosynthesis. Dioxygenase; part of the gene cluster that mediates the biosynthesis of fumonisins B1 (FB1), B2 (FB2), B3 (FB3), and B4 (FB4), which are carcinogenic mycotoxins. Within the pathway, FUM3 performs the C-5 hydroxylation present in FB1 and FB2 and which occurs late in the biosynthesis. The biosynthesis starts with the FUM1-catalyzed carbon chain assembly from one molecule of acetyl-CoA, eight molecules of malonyl-CoA, and two molecules of methionine (in S-adenosyl form). The C18 polyketide chain is released from the enzyme by a nucleophilic attack of a carbanion, which is derived from R-carbon of alanine by decarboxylation, on the carbonyl carbon of polyketide acyl chain. This step is catalyzed by the pyridoxal 5'-phosphate-dependent aminoacyl transferase FUM8. The resultant 3-keto intermediate is then stereospecifically reduced to a 3-hydroxyl product by reductase FUM13. Subsequent oxidations at C-10 by the cytochrome P450 monooxygenase FUM2, C-14 and C-15 by FUM6, FUM12 or FUM15, tricarballylic esterification of the hydroxyl groups on C-14 and C-15 by acyltransferase FUM14, and C-5 hydroxylation by 2-keto-glutarate-dependent dioxygenase FUM3 furnish the biosynthesis of fumonisins. The tricarballylic moieties are most likely derived from the citric acid cycle, and their addition to the carbon backbone may involve FUM7, FUM10, FUM11 and FUM14. The polypeptide is Dioxygenase FUM3 (Gibberella moniliformis (strain M3125 / FGSC 7600) (Maize ear and stalk rot fungus)).